Here is a 164-residue protein sequence, read N- to C-terminus: Transcriptional regulator MraZ (164 aa).

2 SpoVT-AbrB domains span residues 7–57 (THQN…TVGA) and 86–129 (AYPL…NPEA). The interval 133–164 (RRQAARSRARTLATSRRPASAPAAGNTAGAAE) is disordered. The segment covering 142–164 (RTLATSRRPASAPAAGNTAGAAE) has biased composition (low complexity).

The protein belongs to the MraZ family. As to quaternary structure, forms oligomers.

It localises to the cytoplasm. The protein localises to the nucleoid. In Gluconobacter oxydans (strain 621H) (Gluconobacter suboxydans), this protein is Transcriptional regulator MraZ.